The following is a 778-amino-acid chain: DISP complex protein LRCH3 (778 aa).

10 LRR repeats span residues 56-79 (AAVT…AANH), 81-104 (LTDT…ACHF), 105-127 (VSLE…VLNL), 128-150 (QALT…LCNL), 152-172 (LKVL…IGHL), 173-195 (RHLT…IGNL), 197-218 (ALRD…LAEV), 220-239 (LIRL…CYRN), 240-264 (LRHL…CIKG), and 266-290 (IHIF…ERRP). The mediates interaction with DOCK7 stretch occupies residues 56–290 (AAVTGVLSLS…PDLPDYERRP (235 aa)). Residues serine 324, serine 415, and serine 419 each carry the phosphoserine modification. The tract at residues 382–642 (TTEEEENDVK…PATDPTDAIT (261 aa)) is mediates direct interaction with MYO6. Positions 511 to 536 (QKASHNPQRQQPPGNGECSFPSRRSQ) are disordered. Over residues 514–523 (SHNPQRQQPP) the composition is skewed to polar residues. Phosphoserine occurs at positions 608 and 625. The Calponin-homology (CH) domain maps to 645 to 758 (REEELKLIDQ…VTVQALLELA (114 aa)). The interval 758–778 (APPKQPPPQQPQQQQPQLSAV) is disordered. Positions 768 to 778 (PQQQQPQLSAV) are enriched in low complexity.

Component of the DOCK7-induced septin displacement/DISP complex, at least composed of DOCK7, LRCH3 and MYO6.

The protein localises to the cytoplasm. Functionally, as part of the DISP complex, may regulate the association of septins with actin and thereby regulate the actin cytoskeleton. This is DISP complex protein LRCH3 from Mus musculus (Mouse).